The chain runs to 96 residues: Co-chaperonin GroES (96 aa).

It belongs to the GroES chaperonin family. Heptamer of 7 subunits arranged in a ring. Interacts with the chaperonin GroEL.

The protein resides in the cytoplasm. Functionally, together with the chaperonin GroEL, plays an essential role in assisting protein folding. The GroEL-GroES system forms a nano-cage that allows encapsulation of the non-native substrate proteins and provides a physical environment optimized to promote and accelerate protein folding. GroES binds to the apical surface of the GroEL ring, thereby capping the opening of the GroEL channel. The sequence is that of Co-chaperonin GroES from Shewanella baltica (strain OS223).